A 441-amino-acid chain; its full sequence is MNFLAAAGVRRLCAMRAVLPCLWRGKYFSSGNEPAENNTVTPMLRHLIYKIKSTGPITVAEYMKEVLTNPAKGYYMNRDMLGEEGDFITSPEISQMFGELLGIWFISEWIAAGKNAAFQLVELGPGKGTLLGDILRVFSQLGSLLKNCDISLHLVEVSQKLSEIQALTLTEEKVPLERNAESPVYMKGVTKSGIPVSWYRDLQDVPKEYSFYLAHEFFDVLPVHKFQKTPHGWREVLVDIDPQVSDKLRFVLAPCATPAGAFIQNDETRDHVEVCPEAGVVIQELSQRISLTGGAALIADYGHDGTKTDTFRGFCGYRLHDVLTAPGTADLTADVDFSYLRRMSQGKVASLGPVEQQTFLRNMGIDVRLKILLDKTDDPSLRQQLLQGYNMLMNPMKMGERFNFLALVPHQRLHGRNHQTNARQSKPSPSPVAGFGELAWQ.

Residues 1-46 (MNFLAAAGVRRLCAMRAVLPCLWRGKYFSSGNEPAENNTVTPMLRH) constitute a mitochondrion transit peptide. The segment at 415 to 434 (GRNHQTNARQSKPSPSPVAG) is disordered. The segment covering 418 to 427 (HQTNARQSKP) has biased composition (polar residues).

This sequence belongs to the NDUFAF7 family. In terms of assembly, interacts with NDUFS2.

It is found in the mitochondrion. The enzyme catalyses L-arginyl-[protein] + 2 S-adenosyl-L-methionine = N(omega),N(omega)'-dimethyl-L-arginyl-[protein] + 2 S-adenosyl-L-homocysteine + 2 H(+). Functionally, arginine methyltransferase involved in the assembly or stability of mitochondrial NADH:ubiquinone oxidoreductase complex (complex I). Acts by mediating symmetric dimethylation of 'Arg-118' of NDUFS2 after it assembles into the complex I, stabilizing the early intermediate complex. The protein is Protein arginine methyltransferase NDUFAF7, mitochondrial of Bos taurus (Bovine).